The sequence spans 256 residues: Acetyl-coenzyme A carboxylase carboxyl transferase subunit beta 2 (256 aa).

The CoA carboxyltransferase N-terminal domain occupies methionine 1 to alanine 256. Residues cysteine 5, cysteine 8, cysteine 24, and cysteine 27 each contribute to the Zn(2+) site. The segment at cysteine 5–cysteine 27 adopts a C4-type zinc-finger fold.

It belongs to the AccD/PCCB family. In terms of assembly, acetyl-CoA carboxylase is a heterohexamer composed of biotin carboxyl carrier protein (AccB), biotin carboxylase (AccC) and two subunits each of ACCase subunit alpha (AccA) and ACCase subunit beta (AccD). Zn(2+) serves as cofactor.

It localises to the cytoplasm. It carries out the reaction N(6)-carboxybiotinyl-L-lysyl-[protein] + acetyl-CoA = N(6)-biotinyl-L-lysyl-[protein] + malonyl-CoA. The protein operates within lipid metabolism; malonyl-CoA biosynthesis; malonyl-CoA from acetyl-CoA: step 1/1. Component of the acetyl coenzyme A carboxylase (ACC) complex. Biotin carboxylase (BC) catalyzes the carboxylation of biotin on its carrier protein (BCCP) and then the CO(2) group is transferred by the transcarboxylase to acetyl-CoA to form malonyl-CoA. The polypeptide is Acetyl-coenzyme A carboxylase carboxyl transferase subunit beta 2 (Lachnospira eligens (strain ATCC 27750 / DSM 3376 / VPI C15-48 / C15-B4) (Eubacterium eligens)).